The primary structure comprises 428 residues: Serine--tRNA ligase (428 aa).

235–237 (TAE) serves as a coordination point for L-serine. 266–268 (RSE) provides a ligand contact to ATP. L-serine is bound at residue Glu-289. Residue 353 to 356 (EISS) coordinates ATP. Ser-389 contacts L-serine.

It belongs to the class-II aminoacyl-tRNA synthetase family. Type-1 seryl-tRNA synthetase subfamily. Homodimer. The tRNA molecule binds across the dimer.

The protein resides in the cytoplasm. It carries out the reaction tRNA(Ser) + L-serine + ATP = L-seryl-tRNA(Ser) + AMP + diphosphate + H(+). The catalysed reaction is tRNA(Sec) + L-serine + ATP = L-seryl-tRNA(Sec) + AMP + diphosphate + H(+). Its pathway is aminoacyl-tRNA biosynthesis; selenocysteinyl-tRNA(Sec) biosynthesis; L-seryl-tRNA(Sec) from L-serine and tRNA(Sec): step 1/1. In terms of biological role, catalyzes the attachment of serine to tRNA(Ser). Is also able to aminoacylate tRNA(Sec) with serine, to form the misacylated tRNA L-seryl-tRNA(Sec), which will be further converted into selenocysteinyl-tRNA(Sec). This chain is Serine--tRNA ligase, found in Shewanella sp. (strain W3-18-1).